Consider the following 60-residue polypeptide: Phospholipase A2 (60 aa).

Residues Y27, G29, and G31 each contribute to the Ca(2+) site. A disulfide bridge connects residues C28 and C44. The active site involves H47. D48 contributes to the Ca(2+) binding site.

It depends on Ca(2+) as a cofactor. In terms of tissue distribution, expressed by the venom gland.

The protein localises to the secreted. It carries out the reaction a 1,2-diacyl-sn-glycero-3-phosphocholine + H2O = a 1-acyl-sn-glycero-3-phosphocholine + a fatty acid + H(+). Snake venom phospholipase A2 (PLA2) that displays mild but significant inhibition of mouse platelet aggregation induced by ADP and collagen. In vivo, induces edema in the foot pads and gastrocnemius muscles of mice but shows no myonecrotic or myotoxic activity. PA2 catalyzes the calcium-dependent hydrolysis of the 2-acyl groups in 3-sn-phosphoglycerides. The polypeptide is Phospholipase A2 (Lachesis muta rhombeata (Bushmaster)).